A 150-amino-acid chain; its full sequence is 3-dehydroquinate dehydratase (150 aa).

The active-site Proton acceptor is the Y26. Residues N75, H81, and D88 each contribute to the substrate site. H101 acts as the Proton donor in catalysis. Substrate-binding positions include 102–103 (LS) and R112.

This sequence belongs to the type-II 3-dehydroquinase family. Homododecamer.

The enzyme catalyses 3-dehydroquinate = 3-dehydroshikimate + H2O. It participates in metabolic intermediate biosynthesis; chorismate biosynthesis; chorismate from D-erythrose 4-phosphate and phosphoenolpyruvate: step 3/7. In terms of biological role, catalyzes a trans-dehydration via an enolate intermediate. This chain is 3-dehydroquinate dehydratase, found in Shewanella loihica (strain ATCC BAA-1088 / PV-4).